A 145-amino-acid chain; its full sequence is Transcription antitermination protein NusB (145 aa).

The protein belongs to the NusB family.

Functionally, involved in transcription antitermination. Required for transcription of ribosomal RNA (rRNA) genes. Binds specifically to the boxA antiterminator sequence of the ribosomal RNA (rrn) operons. The protein is Transcription antitermination protein NusB of Geotalea daltonii (strain DSM 22248 / JCM 15807 / FRC-32) (Geobacter daltonii).